The primary structure comprises 264 residues: Protein hob3 (264 aa).

One can recognise a BAR domain in the interval V17–S237. Coiled-coil stretches lie at residues E25–A65 and R165–E187.

It localises to the cytoplasm. The protein resides in the cytoskeleton. Its function is as follows. Involved in cytokinesis and septation where it has a role in the localization of F-actin. This Schizosaccharomyces pombe (strain 972 / ATCC 24843) (Fission yeast) protein is Protein hob3 (hob3).